Reading from the N-terminus, the 314-residue chain is MRIGIVVDSACDLPQDFIQRHNIVVLPISVRIGEAVLADHRDEEATLSFLQAHVAERGHEAETTPFSVNQIRDLFLQQLVIDYDHVFCLTISKLRSQIFDNAMQASFAILNDYKPIRQAAGHTSPFALRVIDTLNLFAGQGITAVEAARLRDQGQSVAVIRTRLEQLAEHTYGYMIPRDLYYLRARARTKGDRSVGLIGAALGSALDIKPVLRAYRGVTEPVAKLKGFEPSAEKLFGFTVRKIRDGLMTPTVCVGYGGELAELHALPGYAALQGACQTHGVELLESVMSLTGMVNVGKGALAVGFAAEPHAFSA.

The region spanning isoleucine 3–alanine 307 is the DegV domain. Residues threonine 63 and serine 96 each contribute to the hexadecanoate site.

May bind long-chain fatty acids, such as palmitate, and may play a role in lipid transport or fatty acid metabolism. The sequence is that of DegV domain-containing protein XAC3508 from Xanthomonas axonopodis pv. citri (strain 306).